Consider the following 288-residue polypeptide: Shikimate dehydrogenase (NADP(+)) (288 aa).

Residues 18-20 and Thr-65 contribute to the shikimate site; that span reads SRS. The Proton acceptor role is filled by Lys-69. NADP(+) is bound at residue Glu-81. Residues Asn-90 and Asp-106 each coordinate shikimate. Residues 131 to 135, 155 to 160, and Met-223 contribute to the NADP(+) site; these read GAGGA and NRTLAK. Tyr-225 provides a ligand contact to shikimate. Gly-246 is a binding site for NADP(+).

It belongs to the shikimate dehydrogenase family. In terms of assembly, homodimer.

The enzyme catalyses shikimate + NADP(+) = 3-dehydroshikimate + NADPH + H(+). The protein operates within metabolic intermediate biosynthesis; chorismate biosynthesis; chorismate from D-erythrose 4-phosphate and phosphoenolpyruvate: step 4/7. Functionally, involved in the biosynthesis of the chorismate, which leads to the biosynthesis of aromatic amino acids. Catalyzes the reversible NADPH linked reduction of 3-dehydroshikimate (DHSA) to yield shikimate (SA). The polypeptide is Shikimate dehydrogenase (NADP(+)) (Verminephrobacter eiseniae (strain EF01-2)).